The chain runs to 130 residues: Small ribosomal subunit protein uS11 (130 aa).

This sequence belongs to the universal ribosomal protein uS11 family. In terms of assembly, part of the 30S ribosomal subunit. Interacts with proteins S7 and S18. Binds to IF-3.

In terms of biological role, located on the platform of the 30S subunit, it bridges several disparate RNA helices of the 16S rRNA. Forms part of the Shine-Dalgarno cleft in the 70S ribosome. The chain is Small ribosomal subunit protein uS11 from Gluconacetobacter diazotrophicus (strain ATCC 49037 / DSM 5601 / CCUG 37298 / CIP 103539 / LMG 7603 / PAl5).